The sequence spans 124 residues: Fluoride-specific ion channel FluC (124 aa).

Helical transmembrane passes span 1 to 21 (MIPLILAVSAGGVAGTLLRFA), 38 to 58 (TLAVNIVGCLLIGVLYGLFLV), 69 to 89 (GLIVGFLGGLTTFSSFSLDTV), and 97 to 117 (VALALGYAALSVFGGLLATWA). Gly-76 and Thr-79 together coordinate Na(+).

The protein belongs to the fluoride channel Fluc/FEX (TC 1.A.43) family.

The protein localises to the cell inner membrane. The catalysed reaction is fluoride(in) = fluoride(out). Its activity is regulated as follows. Na(+) is not transported, but it plays an essential structural role and its presence is essential for fluoride channel function. Its function is as follows. Fluoride-specific ion channel. Important for reducing fluoride concentration in the cell, thus reducing its toxicity. The protein is Fluoride-specific ion channel FluC of Pseudomonas fluorescens (strain ATCC BAA-477 / NRRL B-23932 / Pf-5).